Consider the following 158-residue polypeptide: 6,7-dimethyl-8-ribityllumazine synthase 2 (158 aa).

Residues tryptophan 20, 54-56 (AYE), and 78-80 (FVI) contribute to the 5-amino-6-(D-ribitylamino)uracil site. The Proton donor role is filled by arginine 86. 5-amino-6-(D-ribitylamino)uracil is bound at residue serine 111. Histidine 125 is a (2S)-2-hydroxy-3-oxobutyl phosphate binding site.

The protein belongs to the DMRL synthase family. In terms of assembly, homodecamer, arranged as a dimer of pentamers.

The protein resides in the cytoplasm. It carries out the reaction (2S)-2-hydroxy-3-oxobutyl phosphate + 5-amino-6-(D-ribitylamino)uracil = 6,7-dimethyl-8-(1-D-ribityl)lumazine + phosphate + 2 H2O + H(+). The protein operates within cofactor biosynthesis; riboflavin biosynthesis; riboflavin from 2-hydroxy-3-oxobutyl phosphate and 5-amino-6-(D-ribitylamino)uracil: step 1/2. Functionally, catalyzes the formation of 6,7-dimethyl-8-ribityllumazine by condensation of 5-amino-6-(D-ribitylamino)uracil with 3,4-dihydroxy-2-butanone 4-phosphate. This is the penultimate step in the biosynthesis of riboflavin. The isozyme RibH2 but not RibH1 is essential for Brucella intracellular survival and replication inside macrophages or in mice. Displays low catalytic activity in comparison with the isozyme RibH1. Is a highly immunogenic protein. Activates dendritic cells (DCs) in vitro, increasing the levels of costimulatory molecules and the secretion of pro-inflammatory cytokines, and recruits DCs, B cells and CD8+ T cells in vivo, both effects in a TLR4-dependent manner. Induces the cross presentation of covalently attached peptides and generates a strong and long-lasting humoral immune response without adjuvants; TLR4 signaling is necessary for the induction of the cytotoxic response but not for antigen cross presentation. Elicits a TLR4-mediated protective response against B16 melanoma in mice, slowing tumor growth and prolonging mice survival. The chain is 6,7-dimethyl-8-ribityllumazine synthase 2 from Brucella abortus (strain 2308).